We begin with the raw amino-acid sequence, 377 residues long: Chaperone protein DnaJ (377 aa).

The J domain maps to 4–69 (DYYEVLGVSK…EKRARYDQMG (66 aa)). The CR-type zinc finger occupies 131–213 (GTEKEIQVPR…CSGKGTTRKV (83 aa)). The Zn(2+) site is built by cysteine 144, cysteine 147, cysteine 161, cysteine 164, cysteine 187, cysteine 190, cysteine 201, and cysteine 204. CXXCXGXG motif repeat units follow at residues 144 to 151 (CTECHGSG), 161 to 168 (CSQCHGTG), 187 to 194 (CPACNGSG), and 201 to 208 (CKECSGKG).

The protein belongs to the DnaJ family. In terms of assembly, homodimer. Zn(2+) is required as a cofactor.

Its subcellular location is the cytoplasm. In terms of biological role, participates actively in the response to hyperosmotic and heat shock by preventing the aggregation of stress-denatured proteins and by disaggregating proteins, also in an autonomous, DnaK-independent fashion. Unfolded proteins bind initially to DnaJ; upon interaction with the DnaJ-bound protein, DnaK hydrolyzes its bound ATP, resulting in the formation of a stable complex. GrpE releases ADP from DnaK; ATP binding to DnaK triggers the release of the substrate protein, thus completing the reaction cycle. Several rounds of ATP-dependent interactions between DnaJ, DnaK and GrpE are required for fully efficient folding. Also involved, together with DnaK and GrpE, in the DNA replication of plasmids through activation of initiation proteins. This is Chaperone protein DnaJ from Desulfitobacterium hafniense (strain DSM 10664 / DCB-2).